We begin with the raw amino-acid sequence, 373 residues long: 1-deoxy-D-xylulose 5-phosphate reductoisomerase (373 aa).

6 residues coordinate NADPH: T10, G11, S12, I13, R37, and N112. Residue K113 participates in 1-deoxy-D-xylulose 5-phosphate binding. NADPH is bound at residue E114. D134 contacts Mn(2+). Positions 135, 136, 160, and 183 each coordinate 1-deoxy-D-xylulose 5-phosphate. E136 contacts Mn(2+). G189 serves as a coordination point for NADPH. 1-deoxy-D-xylulose 5-phosphate-binding residues include S196, N201, K202, and E205. E205 contributes to the Mn(2+) binding site.

Belongs to the DXR family. It depends on Mg(2+) as a cofactor. Mn(2+) is required as a cofactor.

It catalyses the reaction 2-C-methyl-D-erythritol 4-phosphate + NADP(+) = 1-deoxy-D-xylulose 5-phosphate + NADPH + H(+). Its pathway is isoprenoid biosynthesis; isopentenyl diphosphate biosynthesis via DXP pathway; isopentenyl diphosphate from 1-deoxy-D-xylulose 5-phosphate: step 1/6. Catalyzes the NADPH-dependent rearrangement and reduction of 1-deoxy-D-xylulose-5-phosphate (DXP) to 2-C-methyl-D-erythritol 4-phosphate (MEP). This chain is 1-deoxy-D-xylulose 5-phosphate reductoisomerase, found in Persephonella marina (strain DSM 14350 / EX-H1).